The primary structure comprises 692 residues: Glycine--tRNA ligase beta subunit (692 aa).

Belongs to the class-II aminoacyl-tRNA synthetase family. As to quaternary structure, tetramer of two alpha and two beta subunits.

It is found in the cytoplasm. It carries out the reaction tRNA(Gly) + glycine + ATP = glycyl-tRNA(Gly) + AMP + diphosphate. The polypeptide is Glycine--tRNA ligase beta subunit (Hahella chejuensis (strain KCTC 2396)).